A 469-amino-acid polypeptide reads, in one-letter code: UDP-N-acetylmuramoylalanine--D-glutamate ligase (469 aa).

Position 123-129 (123-129 (GTNGKST)) interacts with ATP.

It belongs to the MurCDEF family.

The protein resides in the cytoplasm. The catalysed reaction is UDP-N-acetyl-alpha-D-muramoyl-L-alanine + D-glutamate + ATP = UDP-N-acetyl-alpha-D-muramoyl-L-alanyl-D-glutamate + ADP + phosphate + H(+). The protein operates within cell wall biogenesis; peptidoglycan biosynthesis. Its function is as follows. Cell wall formation. Catalyzes the addition of glutamate to the nucleotide precursor UDP-N-acetylmuramoyl-L-alanine (UMA). This is UDP-N-acetylmuramoylalanine--D-glutamate ligase from Caulobacter sp. (strain K31).